Consider the following 386-residue polypeptide: Synaptotagmin-5 (386 aa).

Pro residues predominate over residues 1-16 (MFPEPPTPGPPSPDTP). Positions 1 to 23 (MFPEPPTPGPPSPDTPPDSSRIS) are disordered. The Vesicular segment spans residues 1-24 (MFPEPPTPGPPSPDTPPDSSRISH). Residues 25-45 (GPVPPWALATIVLVSGLLIFS) form a helical membrane-spanning segment. The Cytoplasmic portion of the chain corresponds to 46–386 (CCFCLYRKSC…PDRVRLLPAP (341 aa)). C2 domains lie at 108–227 (ELGR…QAWR) and 239–372 (KLGD…AQWH). Leucine 138, aspartate 139, aspartate 145, aspartate 197, phenylalanine 198, aspartate 199, serine 202, aspartate 205, aspartate 270, aspartate 276, aspartate 330, and aspartate 332 together coordinate Ca(2+).

This sequence belongs to the synaptotagmin family. Homodimer. Interacts with both alpha- and beta-tubulin. Requires Ca(2+) as cofactor.

The protein resides in the cytoplasmic vesicle. Its subcellular location is the secretory vesicle. It localises to the synaptic vesicle membrane. The protein localises to the recycling endosome membrane. May be involved in Ca(2+)-dependent exocytosis of secretory vesicles through Ca(2+) and phospholipid binding to the C2 domain or may serve as Ca(2+) sensors in the process of vesicular trafficking and exocytosis. Regulates the Ca(2+)-dependent secretion of norepinephrine in PC12 cells. Required for export from the endocytic recycling compartment to the cell surface. The chain is Synaptotagmin-5 (SYT5) from Homo sapiens (Human).